The chain runs to 82 residues: ATP synthase subunit c (82 aa).

Transmembrane regions (helical) follow at residues 7–27 (AASVLAAALAVGLAAIGPGIG) and 57–77 (LAFMEALTIYGLVVALVLLFA).

It belongs to the ATPase C chain family. As to quaternary structure, F-type ATPases have 2 components, F(1) - the catalytic core - and F(0) - the membrane proton channel. F(1) has five subunits: alpha(3), beta(3), gamma(1), delta(1), epsilon(1). F(0) has four main subunits: a(1), b(1), b'(1) and c(10-14). The alpha and beta chains form an alternating ring which encloses part of the gamma chain. F(1) is attached to F(0) by a central stalk formed by the gamma and epsilon chains, while a peripheral stalk is formed by the delta, b and b' chains.

The protein resides in the cellular thylakoid membrane. In terms of biological role, f(1)F(0) ATP synthase produces ATP from ADP in the presence of a proton or sodium gradient. F-type ATPases consist of two structural domains, F(1) containing the extramembraneous catalytic core and F(0) containing the membrane proton channel, linked together by a central stalk and a peripheral stalk. During catalysis, ATP synthesis in the catalytic domain of F(1) is coupled via a rotary mechanism of the central stalk subunits to proton translocation. Key component of the F(0) channel; it plays a direct role in translocation across the membrane. A homomeric c-ring of between 10-14 subunits forms the central stalk rotor element with the F(1) delta and epsilon subunits. The sequence is that of ATP synthase subunit c from Synechococcus sp. (strain WH7803).